The following is a 368-amino-acid chain: Carbamoyl phosphate synthase small chain (368 aa).

Residues 1–178 (MKAVLGLEDG…GAAGAWKGSG (178 aa)) are CPSase. L-glutamine contacts are provided by Ser-45, Gly-230, and Gly-232. One can recognise a Glutamine amidotransferase type-1 domain in the interval 182–368 (HAVVVDLGIK…KVVKVLGGGL (187 aa)). Catalysis depends on Cys-257, which acts as the Nucleophile. L-glutamine-binding residues include Phe-258, Gln-261, Asn-299, Gly-301, and Tyr-302. Catalysis depends on residues His-342 and Glu-344.

The protein belongs to the CarA family. In terms of assembly, composed of two chains; the small (or glutamine) chain promotes the hydrolysis of glutamine to ammonia, which is used by the large (or ammonia) chain to synthesize carbamoyl phosphate. Tetramer of heterodimers (alpha,beta)4.

It catalyses the reaction hydrogencarbonate + L-glutamine + 2 ATP + H2O = carbamoyl phosphate + L-glutamate + 2 ADP + phosphate + 2 H(+). The enzyme catalyses L-glutamine + H2O = L-glutamate + NH4(+). It functions in the pathway amino-acid biosynthesis; L-arginine biosynthesis; carbamoyl phosphate from bicarbonate: step 1/1. It participates in pyrimidine metabolism; UMP biosynthesis via de novo pathway; (S)-dihydroorotate from bicarbonate: step 1/3. Its function is as follows. Small subunit of the glutamine-dependent carbamoyl phosphate synthetase (CPSase). CPSase catalyzes the formation of carbamoyl phosphate from the ammonia moiety of glutamine, carbonate, and phosphate donated by ATP, constituting the first step of 2 biosynthetic pathways, one leading to arginine and/or urea and the other to pyrimidine nucleotides. The small subunit (glutamine amidotransferase) binds and cleaves glutamine to supply the large subunit with the substrate ammonia. The protein is Carbamoyl phosphate synthase small chain of Methanosarcina mazei (strain ATCC BAA-159 / DSM 3647 / Goe1 / Go1 / JCM 11833 / OCM 88) (Methanosarcina frisia).